A 436-amino-acid chain; its full sequence is 3-ketoacyl-CoA thiolase (436 aa).

Cys99 acts as the Acyl-thioester intermediate in catalysis. Residues His392 and Cys422 each act as proton acceptor in the active site.

The protein belongs to the thiolase-like superfamily. Thiolase family. Heterotetramer of two alpha chains (FadJ) and two beta chains (FadI).

It is found in the cytoplasm. It carries out the reaction an acyl-CoA + acetyl-CoA = a 3-oxoacyl-CoA + CoA. It functions in the pathway lipid metabolism; fatty acid beta-oxidation. In terms of biological role, catalyzes the final step of fatty acid oxidation in which acetyl-CoA is released and the CoA ester of a fatty acid two carbons shorter is formed. This Aeromonas salmonicida (strain A449) protein is 3-ketoacyl-CoA thiolase.